Consider the following 1289-residue polypeptide: Ethylene-insensitive protein 2.1 (1289 aa).

The next 5 helical transmembrane spans lie at 18 to 38 (LLPA…PGKW), 48 to 68 (FGFD…LCQY), 96 to 116 (FLGV…ILGI), 128 to 148 (LSTC…FATL), and 155 to 175 (SFLC…GVLI). Asparagine 185 is a glycosylation site (N-linked (GlcNAc...) asparagine). Residues 199–219 (LMSLLGASIMPHNFFLHSAIV) form a helical membrane-spanning segment. The N-linked (GlcNAc...) asparagine glycan is linked to asparagine 227. The next 7 helical transmembrane spans lie at 235-255 (LNHF…NFVL), 260-280 (ANVF…MSLM), 288-308 (VAPF…AFSW), 335-355 (IIAV…GIYQ), 356-376 (LLIL…IPLF), 393-413 (FLEF…IIFV), and 439-459 (YIVL…LAAT). A glycan (N-linked (GlcNAc...) asparagine) is linked at asparagine 521. The tract at residues 611–659 (LHTEKEDDEGDNWEPEDSSKGVPGSTLSLTSDGPGSFRSLSGKSDAGGN) is disordered. Residues 616-626 (EDDEGDNWEPE) show a composition bias toward acidic residues. The segment covering 635–652 (STLSLTSDGPGSFRSLSG) has biased composition (polar residues). Phosphoserine occurs at positions 646 and 663. Asparagine 745 is a glycosylation site (N-linked (GlcNAc...) asparagine). Residues 792 to 816 (SIADSSERRYSGVRTPPSSDGWDNQ) form a disordered region. A compositionally biased stretch (polar residues) spans 807–816 (PPSSDGWDNQ). Phosphothreonine is present on threonine 819. Position 923 is a phosphoserine (serine 923). N-linked (GlcNAc...) asparagine glycosylation is present at asparagine 1025. Positions 1208-1227 (HRSSPPASNGMLPPASKPGR) are disordered. The short motif at 1274–1281 (LKRYKRRL) is the Nuclear localization signal element.

This sequence belongs to the NRAMP (TC 2.A.55) family.

It is found in the endoplasmic reticulum membrane. The protein localises to the nucleus. The protein resides in the cytoplasm. Central factor in signaling pathways regulated by ethylene (ET) and involved in various processes including development, plant defense, senescence, nucleotide sugar flux, and tropisms. In terms of biological role, trafficking signal inducing ethylene response. The nuclear localization is both necessary and sufficient to activate EIN3-mediated transcription and ethylene responses. The protein is Ethylene-insensitive protein 2.1 of Populus trichocarpa (Western balsam poplar).